Reading from the N-terminus, the 187-residue chain is Photosystem I assembly protein Ycf4 (187 aa).

A run of 2 helical transmembrane segments spans residues 23-43 (INYF…IVGI) and 70-90 (FYGI…ILGV).

Belongs to the Ycf4 family.

It is found in the plastid. The protein localises to the chloroplast thylakoid membrane. Functionally, seems to be required for the assembly of the photosystem I complex. The sequence is that of Photosystem I assembly protein Ycf4 from Chara vulgaris (Common stonewort).